Reading from the N-terminus, the 401-residue chain is Dynactin subunit 2 (401 aa).

The segment at 1-25 is disordered; it reads MADPKYADLPGIARNEPDVYETSDL. Residue Ala2 is modified to N-acetylalanine. Tyr6 carries the phosphotyrosine modification. Phosphoserine is present on Ser83. The residue at position 86 (Tyr86) is a Phosphotyrosine. Positions 99 to 132 form a coiled coil; sequence PQQKYQRLLHEVQELTTEVEKIKTTVKESATEEK. A phosphothreonine mark is found at Thr134 and Thr198. A coiled-coil region spans residues 214-244; sequence EQDKFSQAAKVAELEKRLTELETAVRCDQDA. Ser320 is modified (phosphoserine). A coiled-coil region spans residues 379-399; that stretch reads RENLATVEGNFASIDERMKKL.

The protein belongs to the dynactin subunit 2 family. As to quaternary structure, subunit of dynactin, a multiprotein complex part of a tripartite complex with dynein and a adapter, such as BICDL1, BICD2 or HOOK3. The dynactin complex is built around ACTR1A/ACTB filament and consists of an actin-related filament composed of a shoulder domain, a pointed end and a barbed end. Its length is defined by its flexible shoulder domain. The soulder is composed of 2 DCTN1 subunits, 4 DCTN2 and 2 DCTN3. The 4 DCNT2 (via N-terminus) bind the ACTR1A filament and act as molecular rulers to determine the length. The pointed end is important for binding dynein-dynactin cargo adapters and consists of 4 subunits: ACTR10, DCNT4, DCTN5 and DCTN6. The barbed end is composed of a CAPZA1:CAPZB heterodimers, which binds ACTR1A/ACTB filament and dynactin and stabilizes dynactin. Interacts with BICD2 and CEP135. Interacts with DYNAP. Interacts with ECPAS. Interacts with MAPRE1.

It localises to the cytoplasm. Its subcellular location is the cytoskeleton. The protein resides in the microtubule organizing center. The protein localises to the centrosome. It is found in the membrane. Functionally, part of the dynactin complex that activates the molecular motor dynein for ultra-processive transport along microtubules. In the dynactin soulder domain, binds the ACTR1A filament and acts as a molecular ruler to determine the length. Modulates cytoplasmic dynein binding to an organelle, and plays a role in prometaphase chromosome alignment and spindle organization during mitosis. Involved in anchoring microtubules to centrosomes. May play a role in synapse formation during brain development. The protein is Dynactin subunit 2 of Homo sapiens (Human).